A 63-amino-acid chain; its full sequence is Cytochrome c oxidase subunit 7C, mitochondrial (63 aa).

The N-terminal 16 residues, 1 to 16, are a transit peptide targeting the mitochondrion; sequence MLGQSIRRFTTSVVRR. Residues 17–33 lie on the Mitochondrial matrix side of the membrane; that stretch reads SHYEEGPGKNLPFSVEN. Residue Lys25 is modified to N6-acetyllysine; alternate. Lys25 is subject to N6-succinyllysine; alternate. The helical transmembrane segment at 34–60 threads the bilayer; it reads KWSLLAKMCLYFGSAFATPFLIVRHQL. The Mitochondrial intermembrane portion of the chain corresponds to 61–63; that stretch reads LKT.

Belongs to the cytochrome c oxidase VIIc family. As to quaternary structure, component of the cytochrome c oxidase (complex IV, CIV), a multisubunit enzyme composed of 14 subunits. The complex is composed of a catalytic core of 3 subunits MT-CO1, MT-CO2 and MT-CO3, encoded in the mitochondrial DNA, and 11 supernumerary subunits COX4I, COX5A, COX5B, COX6A, COX6B, COX6C, COX7A, COX7B, COX7C, COX8 and NDUFA4, which are encoded in the nuclear genome. The complex exists as a monomer or a dimer and forms supercomplexes (SCs) in the inner mitochondrial membrane with NADH-ubiquinone oxidoreductase (complex I, CI) and ubiquinol-cytochrome c oxidoreductase (cytochrome b-c1 complex, complex III, CIII), resulting in different assemblies (supercomplex SCI(1)III(2)IV(1) and megacomplex MCI(2)III(2)IV(2)). Interacts with RAB5IF.

The protein localises to the mitochondrion inner membrane. It participates in energy metabolism; oxidative phosphorylation. Functionally, component of the cytochrome c oxidase, the last enzyme in the mitochondrial electron transport chain which drives oxidative phosphorylation. The respiratory chain contains 3 multisubunit complexes succinate dehydrogenase (complex II, CII), ubiquinol-cytochrome c oxidoreductase (cytochrome b-c1 complex, complex III, CIII) and cytochrome c oxidase (complex IV, CIV), that cooperate to transfer electrons derived from NADH and succinate to molecular oxygen, creating an electrochemical gradient over the inner membrane that drives transmembrane transport and the ATP synthase. Cytochrome c oxidase is the component of the respiratory chain that catalyzes the reduction of oxygen to water. Electrons originating from reduced cytochrome c in the intermembrane space (IMS) are transferred via the dinuclear copper A center (CU(A)) of subunit 2 and heme A of subunit 1 to the active site in subunit 1, a binuclear center (BNC) formed by heme A3 and copper B (CU(B)). The BNC reduces molecular oxygen to 2 water molecules using 4 electrons from cytochrome c in the IMS and 4 protons from the mitochondrial matrix. The chain is Cytochrome c oxidase subunit 7C, mitochondrial (COX7C) from Pongo pygmaeus (Bornean orangutan).